The sequence spans 103 residues: G0/G1 switch protein 2 (103 aa).

As to quaternary structure, directly interacts with BCL2; this interaction prevents the formation of the anti-apoptotic BAX-BCL2 complex.

It is found in the mitochondrion. Promotes apoptosis by binding to BCL2, hence preventing the formation of protective BCL2-BAX heterodimers. The protein is G0/G1 switch protein 2 (G0s2) of Mus musculus (Mouse).